Reading from the N-terminus, the 462-residue chain is ATP synthase subunit beta (462 aa).

Glycine 152 to threonine 159 contacts ATP.

Belongs to the ATPase alpha/beta chains family. In terms of assembly, F-type ATPases have 2 components, CF(1) - the catalytic core - and CF(0) - the membrane proton channel. CF(1) has five subunits: alpha(3), beta(3), gamma(1), delta(1), epsilon(1). CF(0) has three main subunits: a(1), b(2) and c(9-12). The alpha and beta chains form an alternating ring which encloses part of the gamma chain. CF(1) is attached to CF(0) by a central stalk formed by the gamma and epsilon chains, while a peripheral stalk is formed by the delta and b chains.

The protein resides in the cell inner membrane. The enzyme catalyses ATP + H2O + 4 H(+)(in) = ADP + phosphate + 5 H(+)(out). In terms of biological role, produces ATP from ADP in the presence of a proton gradient across the membrane. The catalytic sites are hosted primarily by the beta subunits. In Shewanella amazonensis (strain ATCC BAA-1098 / SB2B), this protein is ATP synthase subunit beta.